The sequence spans 80 residues: MKKIVLTLINFYRKYISPSKPPTCRFTPTCSAYTFEAVQRFGVFKGLLLGTWRILRCNPFNKGGYDPVPEEFKLLRRNTK.

This sequence belongs to the UPF0161 family.

It is found in the cell inner membrane. Could be involved in insertion of integral membrane proteins into the membrane. The polypeptide is Putative membrane protein insertion efficiency factor (Kosmotoga olearia (strain ATCC BAA-1733 / DSM 21960 / TBF 19.5.1)).